We begin with the raw amino-acid sequence, 1367 residues long: Insulin-like growth factor 1 receptor (1367 aa).

An N-terminal signal peptide occupies residues 1–30; that stretch reads MKSGSGGGSPTSLWGLLFLSAALSLWPTSG. C33 and C52 form a disulfide bridge. N51, N102, and N135 each carry an N-linked (GlcNAc...) asparagine glycan. 13 cysteine pairs are disulfide-bonded: C150–C178, C182–C205, C192–C211, C215–C224, C219–C230, C231–C239, C235–C248, C251–C260, C264–C276, C282–C303, C307–C321, C324–C328, and C332–C353. N244 is a glycosylation site (N-linked (GlcNAc...) asparagine). N-linked (GlcNAc...) asparagine glycosylation occurs at N314. 2 N-linked (GlcNAc...) asparagine glycosylation sites follow: N417 and N438. The cysteines at positions 455 and 488 are disulfide-linked. 4 consecutive Fibronectin type-III domains span residues 491–609, 610–708, 735–828, and 834–927; these read DVLH…TNAS, VPSI…TEAE, PERK…TMPA, and IPGP…VQAK. N-linked (GlcNAc...) asparagine glycans are attached at residues N534, N607, N622, N640, N747, N756, N764, N900, and N913. At 741 to 935 the chain is on the extracellular side; it reads DVMQVANTTM…AKTGYENFIH (195 aa). The chain crosses the membrane as a helical span at residues 936-959; it reads LIIALPVAVLLIVGGLVIMLYVFH. The Cytoplasmic segment spans residues 960–1367; sequence RKRNNSRLGN…ALPLPQSSTC (408 aa). Positions 977 to 980 match the IRS1- and SHC1-binding motif; the sequence is NPEY. Position 980 is a phosphotyrosine (Y980). The region spanning 999-1274 is the Protein kinase domain; the sequence is ITMSRELGQG…SIKEEMEPGF (276 aa). ATP contacts are provided by residues 1005–1013 and K1033; that span reads LGQGSFGMV. D1135 serves as the catalytic Proton acceptor. Phosphotyrosine; by autocatalysis is present on residues Y1161, Y1165, and Y1166. Residues K1168 and K1171 each participate in a glycyl lysine isopeptide (Lys-Gly) (interchain with G-Cter in ubiquitin) cross-link. A Phosphoserine; by GSK3-beta modification is found at S1278. The residue at position 1282 (S1282) is a Phosphoserine. The disordered stretch occupies residues 1288 to 1367; the sequence is PEPEELDLEP…ALPLPQSSTC (80 aa). Residues 1290–1299 are compositionally biased toward acidic residues; it reads PEELDLEPEN. Over residues 1300–1316 the composition is skewed to low complexity; the sequence is MESVPLDPSASSSSLPL. The span at 1317–1326 shows a compositional bias: basic and acidic residues; the sequence is PDRHSGHKAE.

The protein belongs to the protein kinase superfamily. Tyr protein kinase family. Insulin receptor subfamily. Tetramer of 2 alpha and 2 beta chains linked by disulfide bonds. The alpha chains contribute to the formation of the ligand-binding domain, while the beta chain carries the kinase domain. Interacts with PIK3R1 and with the PTB/PID domains of IRS1 and SHC1 in vitro when autophosphorylated on tyrosine residues. Forms a hybrid receptor with INSR, the hybrid is a tetramer consisting of 1 alpha chain and 1 beta chain of INSR and 1 alpha chain and 1 beta chain of IGF1R. Interacts with ARRB1 and ARRB2. Interacts with GRB10. Interacts with RACK1. Interacts with SOCS1, SOCS2 and SOCS3. Interacts with 14-3-3 proteins. Interacts with NMD2. Interacts with MAP3K5. Interacts with STAT3. Found in a ternary complex with IGF1 and ITGAV:ITGB3 or ITGA6:ITGB4. Interacts (nascent precursor form) with ZFAND2B. As to quaternary structure, (Microbial infection) Interacts with human respiratory syncytial virus (HRSV) fusion glycoprotein F1/F2 heterodimer. In terms of processing, autophosphorylated on tyrosine residues in response to ligand binding. Autophosphorylation occurs in trans, i.e. one subunit of the dimeric receptor phosphorylates tyrosine residues on the other subunit. Autophosphorylation occurs in a sequential manner; Tyr-1165 is predominantly phosphorylated first, followed by phosphorylation of Tyr-1161 and Tyr-1166. While every single phosphorylation increases kinase activity, all three tyrosine residues in the kinase activation loop (Tyr-1165, Tyr-1161 and Tyr-1166) have to be phosphorylated for optimal activity. Can be autophosphorylated at additional tyrosine residues (in vitro). Autophosphorylated is followed by phosphorylation of juxtamembrane tyrosines and C-terminal serines. May also be phosphorylated at Tyr-1161 and Tyr-1166 by mTORC2. Phosphorylation of Tyr-980 is required for IRS1- and SHC1-binding. Phosphorylation of Ser-1278 by GSK-3beta restrains kinase activity and promotes cell surface expression, it requires a priming phosphorylation at Ser-1282. Dephosphorylated by PTPN1. Polyubiquitinated at Lys-1168 and Lys-1171 through both 'Lys-48' and 'Lys-29' linkages, promoting receptor endocytosis and subsequent degradation by the proteasome. Ubiquitination is facilitated by pre-existing phosphorylation. Post-translationally, sumoylated with SUMO1. In terms of processing, controlled by regulated intramembrane proteolysis (RIP). Undergoes metalloprotease-dependent constitutive ectodomain shedding to produce a membrane-anchored 52 kDa C-Terminal fragment which is further processed by presenilin gamma-secretase to yield an intracellular 50 kDa fragment. As to expression, found as a hybrid receptor with INSR in muscle, heart, kidney, adipose tissue, skeletal muscle, hepatoma, fibroblasts, spleen and placenta (at protein level). Expressed in a variety of tissues. Overexpressed in tumors, including melanomas, cancers of the colon, pancreas prostate and kidney.

The protein resides in the cell membrane. The catalysed reaction is L-tyrosyl-[protein] + ATP = O-phospho-L-tyrosyl-[protein] + ADP + H(+). With respect to regulation, activated by autophosphorylation at Tyr-1165, Tyr-1161 and Tyr-1166 on the kinase activation loop; phosphorylation at all three tyrosine residues is required for optimal kinase activity. Inhibited by MSC1609119A-1, BMS-754807, PQIP, benzimidazole pyridinone, isoquinolinedione, bis-azaindole, 3-cyanoquinoline, 2,4-bis-arylamino-1,3-pyrimidine, pyrrolopyrimidine, pyrrole-5-carboxaldehyde, picropodophyllin (PPP), tyrphostin derivatives. While most inhibitors bind to the ATP binding pocket, MSC1609119A-1 functions as allosteric inhibitor and binds close to the DFG motif and the activation loop. Its function is as follows. Receptor tyrosine kinase which mediates actions of insulin-like growth factor 1 (IGF1). Binds IGF1 with high affinity and IGF2 and insulin (INS) with a lower affinity. The activated IGF1R is involved in cell growth and survival control. IGF1R is crucial for tumor transformation and survival of malignant cell. Ligand binding activates the receptor kinase, leading to receptor autophosphorylation, and tyrosines phosphorylation of multiple substrates, that function as signaling adapter proteins including, the insulin-receptor substrates (IRS1/2), Shc and 14-3-3 proteins. Phosphorylation of IRSs proteins lead to the activation of two main signaling pathways: the PI3K-AKT/PKB pathway and the Ras-MAPK pathway. The result of activating the MAPK pathway is increased cellular proliferation, whereas activating the PI3K pathway inhibits apoptosis and stimulates protein synthesis. Phosphorylated IRS1 can activate the 85 kDa regulatory subunit of PI3K (PIK3R1), leading to activation of several downstream substrates, including protein AKT/PKB. AKT phosphorylation, in turn, enhances protein synthesis through mTOR activation and triggers the antiapoptotic effects of IGFIR through phosphorylation and inactivation of BAD. In parallel to PI3K-driven signaling, recruitment of Grb2/SOS by phosphorylated IRS1 or Shc leads to recruitment of Ras and activation of the ras-MAPK pathway. In addition to these two main signaling pathways IGF1R signals also through the Janus kinase/signal transducer and activator of transcription pathway (JAK/STAT). Phosphorylation of JAK proteins can lead to phosphorylation/activation of signal transducers and activators of transcription (STAT) proteins. In particular activation of STAT3, may be essential for the transforming activity of IGF1R. The JAK/STAT pathway activates gene transcription and may be responsible for the transforming activity. JNK kinases can also be activated by the IGF1R. IGF1 exerts inhibiting activities on JNK activation via phosphorylation and inhibition of MAP3K5/ASK1, which is able to directly associate with the IGF1R. Functionally, when present in a hybrid receptor with INSR, binds IGF1. PubMed:12138094 shows that hybrid receptors composed of IGF1R and INSR isoform Long are activated with a high affinity by IGF1, with low affinity by IGF2 and not significantly activated by insulin, and that hybrid receptors composed of IGF1R and INSR isoform Short are activated by IGF1, IGF2 and insulin. In contrast, PubMed:16831875 shows that hybrid receptors composed of IGF1R and INSR isoform Long and hybrid receptors composed of IGF1R and INSR isoform Short have similar binding characteristics, both bind IGF1 and have a low affinity for insulin. This is Insulin-like growth factor 1 receptor (IGF1R) from Homo sapiens (Human).